Reading from the N-terminus, the 384-residue chain is Substance-K receptor (384 aa).

The Extracellular portion of the chain corresponds to 1–32 (MGAHAIVTDANISSSLENNTTGITAFSMPGWQ). N-linked (GlcNAc...) asparagine glycosylation is found at asparagine 11, asparagine 18, and asparagine 19. Residues 33-56 (LALWATAYLVLVLVAVTGNATVIW) traverse the membrane as a helical segment. Residues 57 to 69 (IILAHQRMRTVTN) lie on the Cytoplasmic side of the membrane. A helical membrane pass occupies residues 70–90 (YFIVNLALADLCMAAFNAAFN). The Extracellular portion of the chain corresponds to 91 to 107 (FVYASHNIWYFGRAFCH). Cysteine 106 and cysteine 181 are oxidised to a cystine. The helical transmembrane segment at 108 to 129 (FQNLFPITAMFVSIYSMTAIAA) threads the bilayer. At 130 to 149 (DRYVAIVHPFQPRLSAPGTR) the chain is on the cytoplasmic side. Residues 150–170 (AVIAGIWLLALALAFPQCFYS) form a helical membrane-spanning segment. Topologically, residues 171-196 (TITMDQGATKCVVVWPEDNGSKMLLL) are extracellular. A helical membrane pass occupies residues 197–218 (YHLVVIALIYVLPLLVMLLAYS). At 219 to 251 (VIGLTLWRREVPRHQVHGASLRHLRAKKKFVKT) the chain is on the cytoplasmic side. Residues 252–272 (MVLVVVTFAICWLPYHFYFIL) form a helical membrane-spanning segment. Residues 273 to 290 (GSFQEDIYYHKFIQQVYL) are Extracellular-facing. The helical transmembrane segment at 291–310 (ALFWLAMSSTMYNPIIYCCL) threads the bilayer. The Cytoplasmic portion of the chain corresponds to 311–384 (NHRFRSGFRL…GPQDGLPDEP (74 aa)). Residue cysteine 324 is the site of S-palmitoyl cysteine attachment.

This sequence belongs to the G-protein coupled receptor 1 family.

The protein resides in the cell membrane. In terms of biological role, this is a receptor for the tachykinin neuropeptide substance K (neurokinin A). It is associated with G proteins that activate a phosphatidylinositol-calcium second messenger system. The chain is Substance-K receptor (TACR2) from Canis lupus familiaris (Dog).